A 233-amino-acid chain; its full sequence is Protein-methionine-sulfoxide reductase heme-binding subunit MsrQ (233 aa).

Helical transmembrane passes span 13–33 (IKAALFLLTLLPALHYAHGLW), 44–64 (ALTRGMGIWTLNFLFLTLCVS), 81–101 (MLGLTAFAYGCLHLLTYLWLD), 117–137 (PFITVGATAFLLMLPLALTSS), 151–171 (SLHRAVYAVAILGVVHYLWLV), and 174–194 (VALLDPIIYALVLAILLGWRV). The region spanning 50–164 (GIWTLNFLFL…AVYAVAILGV (115 aa)) is the Ferric oxidoreductase domain.

It belongs to the MsrQ family. Heterodimer of a catalytic subunit (MsrP) and a heme-binding subunit (MsrQ).

The protein resides in the cell inner membrane. Functionally, part of the MsrPQ system that repairs oxidized periplasmic proteins containing methionine sulfoxide residues (Met-O), using respiratory chain electrons. Thus protects these proteins from oxidative-stress damage caused by reactive species of oxygen and chlorine generated by the host defense mechanisms. MsrPQ is essential for the maintenance of envelope integrity under bleach stress, rescuing a wide series of structurally unrelated periplasmic proteins from methionine oxidation. MsrQ provides electrons for reduction to the reductase catalytic subunit MsrP, using the quinone pool of the respiratory chain. Probably involved in protection against reactive chlorine species (RCS) generated by chlorite and hypochlorite. This chain is Protein-methionine-sulfoxide reductase heme-binding subunit MsrQ, found in Azospira oryzae (strain ATCC BAA-33 / DSM 13638 / PS) (Dechlorosoma suillum).